Here is a 220-residue protein sequence, read N- to C-terminus: Ribosomal RNA small subunit methyltransferase G (220 aa).

S-adenosyl-L-methionine contacts are provided by residues glycine 82, leucine 87, 137 to 138 (VE), and arginine 152.

The protein belongs to the methyltransferase superfamily. RNA methyltransferase RsmG family.

The protein resides in the cytoplasm. The catalysed reaction is guanosine(527) in 16S rRNA + S-adenosyl-L-methionine = N(7)-methylguanosine(527) in 16S rRNA + S-adenosyl-L-homocysteine. Its function is as follows. Specifically methylates the N7 position of guanine in position 527 of 16S rRNA. The sequence is that of Ribosomal RNA small subunit methyltransferase G from Janthinobacterium sp. (strain Marseille) (Minibacterium massiliensis).